A 383-amino-acid polypeptide reads, in one-letter code: Acyl-CoA dehydrogenase, short-chain specific (383 aa).

The Proton acceptor role is filled by glutamate 367.

The protein belongs to the acyl-CoA dehydrogenase family. Homotetramer. FAD serves as cofactor.

The enzyme catalyses butanoyl-CoA + oxidized [electron-transfer flavoprotein] + H(+) = (2E)-butenoyl-CoA + reduced [electron-transfer flavoprotein]. It carries out the reaction a short-chain 2,3-saturated fatty acyl-CoA + oxidized [electron-transfer flavoprotein] + H(+) = a short-chain (2E)-enoyl-CoA + reduced [electron-transfer flavoprotein]. Its function is as follows. Has an optimum specificity for 4-carbon length fatty acyl-CoAs. This chain is Acyl-CoA dehydrogenase, short-chain specific, found in Megasphaera elsdenii.